The primary structure comprises 119 residues: FAD-linked sulfhydryl oxidase (119 aa).

Residues 1–97 form the ERV/ALR sulfhydryl oxidase domain; that stretch reads MLHWGPKYWR…ISWSEYKNIY (97 aa). Cys-44 and Cys-47 are joined by a disulfide.

This sequence belongs to the asfivirus B119L family. In terms of assembly, interacts with A151R. Requires FAD as cofactor.

The protein resides in the host cytoplasm. The protein localises to the virion. It carries out the reaction 2 R'C(R)SH + O2 = R'C(R)S-S(R)CR' + H2O2. In terms of biological role, FAD-dependent sulfhydryl oxidase that catalyzes the formation of disulfide bonds in viral proteins produced in the cell cytoplasm. Involved in virion maturation. This chain is FAD-linked sulfhydryl oxidase, found in African swine fever virus (isolate Warthog/Namibia/Wart80/1980) (ASFV).